The chain runs to 602 residues: MQSKGTIISIQFLLRFLLLWVLIGKSHTEEDIIITTKNGKVRGMNLPVLDGTVTAFLGIPYAQPPLGRLRFKKPQFLTKWSDIWNATKHANSCYQNADQSFPGFPGSEMWNPNTDLSEDCLYLNVWSPTPKPKNATVMIWIYGGGFQTGTSSLPVYDGKFLARVERVIVVSMNYRVGALGFLALPGNPEIPGNMGLFDQQLALQWVQKNIAAFGGNPKSVTLFGESAGAGSVSLHLLSPRSQPLFTRAILQSGSSNAPWAVMSLDEAKNRTLTLAKFIGCSKENDTEIIKCLRNKDPQEILLNELLVVPSDTLLSVNFGPVVDGDFLTDMPDTLLQLGQFKKTQILVGVNKDEGTAFLVYGAPGFSKDNDSIITRKEFQEGLKIYFPGVSEFGREAILFYYVDLLDDQRAEKYREALDDVLGDYNIICPALEFTTKFSELGNNAFFYYFEHRSSQLPWPEWMGVMHGYEIEFVFGLPLERRVNYTRAEEILSRSIMNYWANFAKYGNPNGTQNNSTRWPAFRSTDQKYLTLNAESPKVYTKLRAQQCRFWTLFFPKVLEMTGNIDEAEREWRAGFYRWNNYMMDWKNQFNDYTSKKESCAGL.

An N-terminal signal peptide occupies residues 1 to 28; sequence MQSKGTIISIQFLLRFLLLWVLIGKSHT. An N-linked (GlcNAc...) asparagine glycan is attached at Asn-85. Residues Cys-93 and Cys-120 are joined by a disulfide bond. An N-linked (GlcNAc...) asparagine glycan is attached at Asn-134. Position 144 to 145 (144 to 145) interacts with substrate; it reads GG. Residue Ser-226 is the Acyl-ester intermediate of the active site. Ser-226 is modified (phosphoserine). Residues Asn-269 and Asn-284 are each glycosylated (N-linked (GlcNAc...) asparagine). The cysteines at positions 280 and 291 are disulfide-linked. The active-site Charge relay system is the Glu-353. An N-linked (GlcNAc...) asparagine glycan is attached at Asn-369. A disulfide bridge links Cys-428 with Cys-547. The active-site Charge relay system is His-466. N-linked (GlcNAc...) asparagine glycosylation is found at Asn-483, Asn-509, Asn-513, and Asn-514.

The protein belongs to the type-B carboxylesterase/lipase family. In terms of assembly, homotetramer; disulfide-linked. Dimer of dimers.

It is found in the secreted. The enzyme catalyses an acylcholine + H2O = a carboxylate + choline + H(+). In terms of biological role, esterase with broad substrate specificity. Contributes to the inactivation of the neurotransmitter acetylcholine. Can degrade neurotoxic organophosphate esters. This is Cholinesterase (BCHE) from Panthera tigris tigris (Bengal tiger).